Consider the following 982-residue polypeptide: Ubiquitin carboxyl-terminal hydrolase 37 (982 aa).

A KEN box 1 motif is present at residues 32–34; the sequence is KEN. 2 short sequence motifs (D-box) span residues 71 to 79 and 96 to 105; these read RLMLTLQDN and RLFLDAVHQN. Position 115 is a phosphoserine (serine 115). Residues 128-162 form a disordered region; that stretch reads RTSQKETHRQLSYSDNQVSSKRGSLETKDDIPFRK. The segment covering 137–149 has biased composition (polar residues); the sequence is QLSYSDNQVSSKR. Over residues 150–160 the composition is skewed to basic and acidic residues; that stretch reads GSLETKDDIPF. The D-box 3 signature appears at 161–169; the sequence is RKVLGNPGR. Position 171 is a phosphoserine (serine 171). Residues 183–201 show a composition bias toward low complexity; the sequence is TRTIPSLTSTSTPLRSGLL. The tract at residues 183-307 is disordered; sequence TRTIPSLTST…TPSAKRSLGF (125 aa). Serine 213 is modified (phosphoserine). The KEN box 2 signature appears at 224-226; sequence KEN. Positions 246–260 are enriched in basic and acidic residues; the sequence is SREKQLSLKQSEENR. A compositionally biased stretch (polar residues) spans 282–301; the sequence is YSPSSTNLDRTNISSQTPSA. Positions 343–954 constitute a USP domain; that stretch reads QGFSNLGNTC…SGYIFFYMHK (612 aa). Residue cysteine 352 is the Nucleophile of the active site. Serine 631 is modified (phosphoserine; by CDK2). A phosphoserine mark is found at serine 653 and serine 655. Disordered stretches follow at residues 672–705 and 720–798; these read ISSSEQQQEDLEKDSKSCKLEPDKSELENSGFDA and KREA…GEVD. 2 stretches are compositionally biased toward basic and acidic residues: residues 684 to 698 and 720 to 735; these read KDSKSCKLEPDKSEL and KREASPSPSHEDDDKP. A UIM 1 domain is found at 707 to 726; sequence SEEELLAAVLEISKREASPS. At serine 773 the chain carries Phosphoserine. Positions 777 to 789 are enriched in basic and acidic residues; sequence ITKDCDENKENKT. The KEN box 3 signature appears at 785–787; it reads KEN. UIM domains lie at 809–828 and 831–850; these read REEQELQQALAQSLQEQEAW and KEDDDLKRATELSLQEFNNS. Histidine 909 serves as the catalytic Proton acceptor.

Belongs to the peptidase C19 family. As to quaternary structure, interacts with FZR1/CDH1. Interacts with CDT1. In terms of processing, polyubiquitinated via 'Lys-11'-linked ubiquitin by the APC(CDH1) complex during late mitosis, leading to its degradation. Able to mediate auto-deubiquitination. Phosphorylated at Ser-631 by CDK2 during G1/S phase but not during mitosis; phosphorylation at Ser-631 is required for deubiquitinase activity. Also polyubiquitinated during early G1 phase, without leading to degradation. Phosphorylated at Ser-115 by ATM following DNA damage, which in turn increases its deubiquitination activity towards BLM.

The protein resides in the nucleus. It localises to the chromosome. The catalysed reaction is Thiol-dependent hydrolysis of ester, thioester, amide, peptide and isopeptide bonds formed by the C-terminal Gly of ubiquitin (a 76-residue protein attached to proteins as an intracellular targeting signal).. Functionally, deubiquitinase that plays a role in different processes including cell cycle regulation, DNA replication or DNA damage response. Antagonizes the anaphase-promoting complex (APC/C) during G1/S transition by mediating deubiquitination of cyclin-A (CCNA1 and CCNA2), thereby promoting S phase entry. Specifically mediates deubiquitination of 'Lys-11'-linked polyubiquitin chains, a specific ubiquitin-linkage type mediated by the APC/C complex. Phosphorylation at Ser-628 during G1/S phase maximizes the deubiquitinase activity, leading to prevent degradation of cyclin-A (CCNA1 and CCNA2). Plays an important role in the regulation of DNA replication by stabilizing the licensing factor CDT1. Also plays an essential role beyond S-phase entry to promote the efficiency and fidelity of replication by deubiquitinating checkpoint kinase 1/CHK1, promoting its stability. Sustains the DNA damage response (DDR) by deubiquitinating and stabilizing the ATP-dependent DNA helicase BLM. Mechanistically, DNA double-strand breaks (DSB) promotes ATM-mediated phosphorylation of USP37 and enhances the binding between USP37 and BLM. Promotes cell migration by deubiquitinating and stabilizing the epithelial-mesenchymal transition (EMT)-inducing transcription factor SNAI. Plays a role in the regulation of mitotic spindle assembly and mitotic progression by associating with chromatin-associated WAPL and stabilizing it through deubiquitination. In Sus scrofa (Pig), this protein is Ubiquitin carboxyl-terminal hydrolase 37 (USP37).